Consider the following 149-residue polypeptide: Cytochrome c-type biogenesis protein CcmE (149 aa).

At 1 to 7 (MKKRHQR) the chain is on the cytoplasmic side. A helical; Signal-anchor for type II membrane protein membrane pass occupies residues 8–28 (LFLVLGVVAGVSVATALVLNA). Residues 29–149 (FRDNMTFFIT…EHSVDEVGDY (121 aa)) are Periplasmic-facing. Heme is bound by residues His-123 and Tyr-127.

The protein belongs to the CcmE/CycJ family.

The protein resides in the cell inner membrane. Heme chaperone required for the biogenesis of c-type cytochromes. Transiently binds heme delivered by CcmC and transfers the heme to apo-cytochromes in a process facilitated by CcmF and CcmH. In Halorhodospira halophila (strain DSM 244 / SL1) (Ectothiorhodospira halophila (strain DSM 244 / SL1)), this protein is Cytochrome c-type biogenesis protein CcmE.